We begin with the raw amino-acid sequence, 423 residues long: MASALEQFVNSVRQLSAQGQMTQLCELINKSGELLAKNLSHLDTVLGALDVQEHSLGVLAVLFVKFSMPSIPDFETLFSQVQLFISTCNGEHIRYATDTFAGLCHQLTNALVERKQPLRGISILRQAIDKMQMNTNQLTSIHADLCQLCLLAKCFKPALPYLDVDMMDICKENGAYDAKHFLCYYYYGGMIYTGLKNFERALYFYEQAITTPAMAVSHIMLESYKKYILVSLILLGKVQQLPKYTSQIVGRFIKPLSNAYHELAQVYSTNKPSELRNLVNKHSETFTRDNNMGLVKQCLSSLYKKNIQRLTKTFLTLSLQDMASRVQLSGPQEAEKYVLHMIEDGEIFASINQKDGMVCFHDNPEKYNNPAMLHNIDQEMLKCIELDERLKAMDQEITVNPQFVQKSMGSQEDDSGTKPSSYS.

Residues 197-365 (NFERALYFYE…GMVCFHDNPE (169 aa)) form the PCI domain. The tract at residues 402–423 (QFVQKSMGSQEDDSGTKPSSYS) is disordered.

Belongs to the CSN3 family. As to quaternary structure, component of the CSN complex, probably composed of COPS1, COPS2, COPS3, COPS4, COPS5, COPS6, COPS7, COPS8 and COPS9.

Its subcellular location is the cytoplasm. It localises to the nucleus. Its function is as follows. Component of the COP9 signalosome complex (CSN), a complex involved in various cellular and developmental processes. The CSN complex is an essential regulator of the ubiquitin (Ubl) conjugation pathway by mediating the deneddylation of the cullin subunits of E3 ligase complexes, leading to modify the Ubl ligase activity. In Gallus gallus (Chicken), this protein is COP9 signalosome complex subunit 3 (COPS3).